We begin with the raw amino-acid sequence, 1020 residues long: Phosphatidylinositol 3-kinase VPS34 (1020 aa).

Positions 49–210 constitute a C2 PI3K-type domain; that stretch reads LSTKFEDPTV…NWLDKMVLPK (162 aa). One can recognise a PIK helical domain in the interval 331–577; the sequence is DKELKPTPQL…DGPIKIYMDI (247 aa). The PI3K/PI4K catalytic domain occupies 666-1004; sequence YPEESSVFKS…LINDSVNAFL (339 aa). Residues 672-678 form a G-loop region; that stretch reads VFKSSLA. The catalytic loop stretch occupies residues 873–881; sequence GVGDRHLDN. Residues 892–913 are activation loop; the sequence is HADFGYILGRDPKPFPPLMKLP.

It belongs to the PI3/PI4-kinase family. Component of the autophagy-specific VPS34 PI3-kinase complex I composed of at least VPS15, VPS30, VPS34, and of the VPS34 PI3-kinase complex II composed of VPS15, VPS30, VPS34 and VPS38. Interacts with VMNA7. Post-translationally, autophosphorylated.

It is found in the golgi apparatus. Its subcellular location is the trans-Golgi network membrane. It localises to the endosome membrane. It catalyses the reaction a 1,2-diacyl-sn-glycero-3-phospho-(1D-myo-inositol) + ATP = a 1,2-diacyl-sn-glycero-3-phospho-(1D-myo-inositol-3-phosphate) + ADP + H(+). Functionally, multifunctional phosphatidylinositol 3-kinase involved in acidification of vacuoles, pH-dependent cell growth, and autophagocytosis. Plays an important role in protein transport and virulence. Component of the autophagy-specific VPS34 PI3-kinase complex I essential to recruit the ATG8-phosphatidylinositol conjugate and the ATG12-ATG5 conjugate to the pre-autophagosomal structure. Also involved in endosome-to-Golgi retrograde transport as part of the VPS34 PI3-kinase complex II. This second complex is required for the endosome-to-Golgi retrieval of PEP1 and KEX2, and the recruitment of VPS5 and VPS7, two components of the retromer complex, to endosomal membranes (probably through the synthesis of a specific pool of phosphatidylinositol 3-phosphate recruiting the retromer to the endosomes). Finally, it might also be involved in ethanol tolerance and cell wall integrity. This chain is Phosphatidylinositol 3-kinase VPS34, found in Candida albicans (Yeast).